The sequence spans 342 residues: Ketol-acid reductoisomerase (NADP(+)) (342 aa).

The KARI N-terminal Rossmann domain occupies 2-181 (VKVYYNGDIK…GGARAGVLET (180 aa)). NADP(+)-binding positions include 25 to 28 (YGSQ), arginine 48, serine 52, and 82 to 85 (DEQQ). Residue histidine 107 is part of the active site. Glycine 133 provides a ligand contact to NADP(+). In terms of domain architecture, KARI C-terminal knotted spans 182 to 327 (TFKEETETDL…RQLREMMPFV (146 aa)). Positions 190, 194, 226, and 230 each coordinate Mg(2+). Serine 251 is a substrate binding site.

This sequence belongs to the ketol-acid reductoisomerase family. It depends on Mg(2+) as a cofactor.

The catalysed reaction is (2R)-2,3-dihydroxy-3-methylbutanoate + NADP(+) = (2S)-2-acetolactate + NADPH + H(+). It catalyses the reaction (2R,3R)-2,3-dihydroxy-3-methylpentanoate + NADP(+) = (S)-2-ethyl-2-hydroxy-3-oxobutanoate + NADPH + H(+). It participates in amino-acid biosynthesis; L-isoleucine biosynthesis; L-isoleucine from 2-oxobutanoate: step 2/4. Its pathway is amino-acid biosynthesis; L-valine biosynthesis; L-valine from pyruvate: step 2/4. Its function is as follows. Involved in the biosynthesis of branched-chain amino acids (BCAA). Catalyzes an alkyl-migration followed by a ketol-acid reduction of (S)-2-acetolactate (S2AL) to yield (R)-2,3-dihydroxy-isovalerate. In the isomerase reaction, S2AL is rearranged via a Mg-dependent methyl migration to produce 3-hydroxy-3-methyl-2-ketobutyrate (HMKB). In the reductase reaction, this 2-ketoacid undergoes a metal-dependent reduction by NADPH to yield (R)-2,3-dihydroxy-isovalerate. The chain is Ketol-acid reductoisomerase (NADP(+)) from Bacillus velezensis (strain DSM 23117 / BGSC 10A6 / LMG 26770 / FZB42) (Bacillus amyloliquefaciens subsp. plantarum).